Consider the following 326-residue polypeptide: Nitrogen metabolite regulation-like protein bik4 (326 aa).

Residues glycine 13–valine 18 and phenylalanine 161–asparagine 164 contribute to the NADP(+) site.

This sequence belongs to the NmrA-type oxidoreductase family.

In terms of biological role, nitrogen metabolite regulation-like protein involved in the regulation of the gene cluster that mediates the biosynthesis of bikaverin, a red pigment also considered as a mycotoxin. This is Nitrogen metabolite regulation-like protein bik4 from Gibberella fujikuroi (strain CBS 195.34 / IMI 58289 / NRRL A-6831) (Bakanae and foot rot disease fungus).